The primary structure comprises 195 residues: Recombination protein RecR (195 aa).

The C4-type zinc finger occupies 54–69; the sequence is CTICGSYTEDEICSIC. The region spanning 77–172 is the Toprim domain; sequence ATICVVGFPQ…NITRLASGLP (96 aa).

This sequence belongs to the RecR family.

May play a role in DNA repair. It seems to be involved in an RecBC-independent recombinational process of DNA repair. It may act with RecF and RecO. This chain is Recombination protein RecR, found in Treponema denticola (strain ATCC 35405 / DSM 14222 / CIP 103919 / JCM 8153 / KCTC 15104).